Reading from the N-terminus, the 347-residue chain is NADH-ubiquinone oxidoreductase chain 2 (347 aa).

10 helical membrane-spanning segments follow: residues 3 to 23 (PPIL…VLTS), 25 to 45 (HWLT…PILM), 60 to 80 (LLTQ…NLMF), 96 to 116 (AMVT…FWVP), 149 to 169 (IDPN…GWGG), 178 to 198 (ILAY…LYNP), 200 to 220 (MMLL…MLFM), 237 to 257 (APLI…LPPL), 274 to 294 (EMII…YFYM), and 323 to 343 (MILL…TPLL).

The protein belongs to the complex I subunit 2 family. Core subunit of respiratory chain NADH dehydrogenase (Complex I) which is composed of 45 different subunits. Interacts with TMEM242.

It is found in the mitochondrion inner membrane. The catalysed reaction is a ubiquinone + NADH + 5 H(+)(in) = a ubiquinol + NAD(+) + 4 H(+)(out). In terms of biological role, core subunit of the mitochondrial membrane respiratory chain NADH dehydrogenase (Complex I) which catalyzes electron transfer from NADH through the respiratory chain, using ubiquinone as an electron acceptor. Essential for the catalytic activity and assembly of complex I. The sequence is that of NADH-ubiquinone oxidoreductase chain 2 from Mungos mungo (Banded mongoose).